Here is a 258-residue protein sequence, read N- to C-terminus: Aspartate/glutamate leucyltransferase (258 aa).

Belongs to the R-transferase family. Bpt subfamily.

The protein resides in the cytoplasm. It catalyses the reaction N-terminal L-glutamyl-[protein] + L-leucyl-tRNA(Leu) = N-terminal L-leucyl-L-glutamyl-[protein] + tRNA(Leu) + H(+). The enzyme catalyses N-terminal L-aspartyl-[protein] + L-leucyl-tRNA(Leu) = N-terminal L-leucyl-L-aspartyl-[protein] + tRNA(Leu) + H(+). In terms of biological role, functions in the N-end rule pathway of protein degradation where it conjugates Leu from its aminoacyl-tRNA to the N-termini of proteins containing an N-terminal aspartate or glutamate. The protein is Aspartate/glutamate leucyltransferase of Bradyrhizobium sp. (strain ORS 278).